A 285-amino-acid polypeptide reads, in one-letter code: Tetraspanin-3 (285 aa).

Residues 1 to 6 lie on the Cytoplasmic side of the membrane; it reads MRTSNH. The helical transmembrane segment at 7 to 27 threads the bilayer; the sequence is LIGLVNFLTFLLSIPILGGGI. The Extracellular segment spans residues 28-43; sequence WLSSRANSTDCLRFLQ. N-linked (GlcNAc...) asparagine glycosylation is present at Asn-34. The chain crosses the membrane as a helical span at residues 44-64; the sequence is WPLIVIGISIMVVSLAGFAGA. The Cytoplasmic segment spans residues 65–71; the sequence is CYRNKFL. A helical transmembrane segment spans residues 72–92; that stretch reads MWLYLVVMLLIIAALIGFIIF. Residues 93 to 235 lie on the Extracellular side of the membrane; it reads AYAVTDKGSG…LGSLKKSWRK (143 aa). N-linked (GlcNAc...) asparagine glycosylation occurs at Asn-187. A helical transmembrane segment spans residues 236-256; sequence VSVINIVVLIILVIFYVIAYA. Residues 257–285 are Cytoplasmic-facing; sequence AYRNVKRIDNDEPAGEARMTKSHPSHFHL.

The protein belongs to the tetraspanin (TM4SF) family.

It localises to the cell membrane. Its function is as follows. May be involved in the regulation of cell differentiation. This is Tetraspanin-3 (TET3) from Arabidopsis thaliana (Mouse-ear cress).